The following is a 398-amino-acid chain: 4-hydroxy-3-methylbut-2-enyl diphosphate reductase (398 aa).

[4Fe-4S] cluster is bound at residue Cys66. His96 is a (2E)-4-hydroxy-3-methylbut-2-enyl diphosphate binding site. A dimethylallyl diphosphate-binding site is contributed by His96. Isopentenyl diphosphate is bound at residue His96. Position 157 (Cys157) interacts with [4Fe-4S] cluster. His185 contributes to the (2E)-4-hydroxy-3-methylbut-2-enyl diphosphate binding site. Dimethylallyl diphosphate is bound at residue His185. His185 provides a ligand contact to isopentenyl diphosphate. Glu187 serves as the catalytic Proton donor. A (2E)-4-hydroxy-3-methylbut-2-enyl diphosphate-binding site is contributed by Thr250. Cys288 provides a ligand contact to [4Fe-4S] cluster. The (2E)-4-hydroxy-3-methylbut-2-enyl diphosphate site is built by Ser317, Ser318, Asn319, and Ser380. Ser317, Ser318, Asn319, and Ser380 together coordinate dimethylallyl diphosphate. Residues Ser317, Ser318, Asn319, and Ser380 each contribute to the isopentenyl diphosphate site.

It belongs to the IspH family. It depends on [4Fe-4S] cluster as a cofactor.

It catalyses the reaction isopentenyl diphosphate + 2 oxidized [2Fe-2S]-[ferredoxin] + H2O = (2E)-4-hydroxy-3-methylbut-2-enyl diphosphate + 2 reduced [2Fe-2S]-[ferredoxin] + 2 H(+). The enzyme catalyses dimethylallyl diphosphate + 2 oxidized [2Fe-2S]-[ferredoxin] + H2O = (2E)-4-hydroxy-3-methylbut-2-enyl diphosphate + 2 reduced [2Fe-2S]-[ferredoxin] + 2 H(+). It participates in isoprenoid biosynthesis; dimethylallyl diphosphate biosynthesis; dimethylallyl diphosphate from (2E)-4-hydroxy-3-methylbutenyl diphosphate: step 1/1. Its pathway is isoprenoid biosynthesis; isopentenyl diphosphate biosynthesis via DXP pathway; isopentenyl diphosphate from 1-deoxy-D-xylulose 5-phosphate: step 6/6. Catalyzes the conversion of 1-hydroxy-2-methyl-2-(E)-butenyl 4-diphosphate (HMBPP) into a mixture of isopentenyl diphosphate (IPP) and dimethylallyl diphosphate (DMAPP). Acts in the terminal step of the DOXP/MEP pathway for isoprenoid precursor biosynthesis. The sequence is that of 4-hydroxy-3-methylbut-2-enyl diphosphate reductase from Prochlorococcus marinus (strain AS9601).